A 395-amino-acid polypeptide reads, in one-letter code: Obg-like ATPase 1 (395 aa).

Residues 22–280 form the OBG-type G domain; the sequence is LKVGILGLPN…MPEDERQKYL (259 aa). Residue 31–36 coordinates ATP; that stretch reads NVGKST. Residues serine 35 and threonine 55 each coordinate Mg(2+). Leucine 228 provides a ligand contact to ATP. A TGS domain is found at 301 to 384; it reads QLEYFFTSGE…QDGDVIFFKF (84 aa).

The protein belongs to the TRAFAC class OBG-HflX-like GTPase superfamily. OBG GTPase family. YchF/OLA1 subfamily. In terms of assembly, monomer. Mg(2+) is required as a cofactor. As to expression, expressed in the nervous system, pharyngeal muscles and intestine (at protein level).

It is found in the cytoplasm. Hydrolyzes ATP, and can also hydrolyze GTP with lower efficiency. Has lower affinity for GTP. Plays a role in regulating starvation-induced thermotaxis responses in AFD thermosensory neurons. This chain is Obg-like ATPase 1, found in Caenorhabditis elegans.